A 436-amino-acid chain; its full sequence is Histone acetyltransferase type B subunit 2 (436 aa).

WD repeat units follow at residues 136 to 176, 187 to 227, 237 to 277, 284 to 324, and 328 to 368; these read DHKG…SLPT, GHTK…KGNK, HHSS…TTRA, QHRD…TKLH, and SHTD…EEQT. The segment at 370–374 is interaction with the histone H4 N-terminus; it reads EDAQD. The stretch at 385 to 425 is one WD 6 repeat; that stretch reads GHTNRISDFSWNLNDPWVLCSAAEDNLLQVWKVADAIVGKD.

This sequence belongs to the WD repeat RBAP46/RBAP48/MSI1 family. In terms of assembly, component of the HAT-B complex composed of at least hat1 and hat2. The HAT-B complex binds to histone H4 tail.

It is found in the cytoplasm. Its subcellular location is the nucleus. Its function is as follows. Regulatory subunit of the histone acetylase B (HAT-B) complex. The complex acetylates 'Lys-12' of histone H4 which is required for telomeric silencing. This chain is Histone acetyltransferase type B subunit 2 (hat2), found in Aspergillus fumigatus (strain ATCC MYA-4609 / CBS 101355 / FGSC A1100 / Af293) (Neosartorya fumigata).